A 541-amino-acid polypeptide reads, in one-letter code: Chaperonin GroEL 2 (541 aa).

Residues threonine 29–proline 32, aspartate 86–threonine 90, glycine 413, asparagine 476–alanine 478, and aspartate 492 each bind ATP.

The protein belongs to the chaperonin (HSP60) family. In terms of assembly, forms a cylinder of 14 subunits composed of two heptameric rings stacked back-to-back. Interacts with the co-chaperonin GroES.

The protein resides in the secreted. It is found in the capsule. It localises to the cell surface. Its subcellular location is the cell wall. It catalyses the reaction ATP + H2O + a folded polypeptide = ADP + phosphate + an unfolded polypeptide.. Functionally, together with its co-chaperonin GroES, plays an essential role in assisting protein folding. The GroEL-GroES system forms a nano-cage that allows encapsulation of the non-native substrate proteins and provides a physical environment optimized to promote and accelerate protein folding. This chain is Chaperonin GroEL 2, found in Mycolicibacterium paratuberculosis (strain ATCC BAA-968 / K-10) (Mycobacterium paratuberculosis).